A 280-amino-acid chain; its full sequence is Fructose-1,6-bisphosphatase class 1 (280 aa).

Residues Glu64, Asp83, Leu85, and Asp86 each coordinate Mg(2+). Substrate-binding positions include 86 to 89 (DGSS), Tyr190, and Lys221. Glu227 contributes to the Mg(2+) binding site.

The protein belongs to the FBPase class 1 family. In terms of assembly, homotetramer. Mg(2+) is required as a cofactor.

The protein localises to the cytoplasm. It carries out the reaction beta-D-fructose 1,6-bisphosphate + H2O = beta-D-fructose 6-phosphate + phosphate. It participates in carbohydrate biosynthesis; gluconeogenesis. The protein is Fructose-1,6-bisphosphatase class 1 of Campylobacter hominis (strain ATCC BAA-381 / DSM 21671 / CCUG 45161 / LMG 19568 / NCTC 13146 / CH001A).